Here is a 170-residue protein sequence, read N- to C-terminus: Myelin-associated oligodendrocyte basic protein (170 aa).

The interval 69–170 (SRRATSPQKP…GSPTRAPRFW (102 aa)) is disordered. Positions 82-92 (PAASPVVVRAP) are enriched in low complexity. Phosphoserine occurs at positions 85, 98, and 107. The stretch at 93–101 (PAKPKSPPR) is repeat 1. Over residues 93–114 (PAKPKSPPRPAKPRSPPIPAKP) the composition is skewed to pro residues. Residues 93–119 (PAKPKSPPRPAKPRSPPIPAKPRSPSR) form a 3 X 9 AA approximate tandem repeats region. The 2; half-length repeat unit spans residues 105–110 (PRSPPI). Residues 111–119 (PAKPRSPSR) form repeat 3. Basic and acidic residues predominate over residues 118–130 (SRTERQPRPRPEV). The segment covering 138–151 (KPPQKSKQPARSSP) has biased composition (low complexity).

As to expression, expressed predominantly in oligodendrocytes, in CNS myelin of the cerebrum and spinal cord. No expression seen in sciatic nerve.

It localises to the cytoplasm. It is found in the perinuclear region. May play a role in compacting or stabilizing the myelin sheath, possibly by binding the negatively charged acidic phospholipids of the cytoplasmic membrane. The polypeptide is Myelin-associated oligodendrocyte basic protein (Mobp) (Rattus norvegicus (Rat)).